Reading from the N-terminus, the 274-residue chain is Diaminopimelate epimerase (274 aa).

Substrate is bound by residues N11, Q44, and N64. Residue C73 is the Proton donor of the active site. Substrate is bound by residues 74-75 (GN), N157, N190, and 208-209 (ER). Residue C217 is the Proton acceptor of the active site. 218–219 (GS) is a binding site for substrate.

This sequence belongs to the diaminopimelate epimerase family. Homodimer.

Its subcellular location is the cytoplasm. It carries out the reaction (2S,6S)-2,6-diaminopimelate = meso-2,6-diaminopimelate. It participates in amino-acid biosynthesis; L-lysine biosynthesis via DAP pathway; DL-2,6-diaminopimelate from LL-2,6-diaminopimelate: step 1/1. Its function is as follows. Catalyzes the stereoinversion of LL-2,6-diaminopimelate (L,L-DAP) to meso-diaminopimelate (meso-DAP), a precursor of L-lysine and an essential component of the bacterial peptidoglycan. The sequence is that of Diaminopimelate epimerase from Photorhabdus laumondii subsp. laumondii (strain DSM 15139 / CIP 105565 / TT01) (Photorhabdus luminescens subsp. laumondii).